Here is a 1014-residue protein sequence, read N- to C-terminus: Chondroitin sulfate ABC exolyase (1014 aa).

A signal peptide spans 1–14 (MLILSFLCPAFLNA). Positions 24, 26, 50, 53, and 161 each coordinate Ca(2+). Active-site proton acceptor residues include histidine 345 and histidine 454. Tyrosine 461 functions as the Proton donor in the catalytic mechanism.

The protein belongs to the polysaccharide lyase 8 family. Monomer. It depends on Ca(2+) as a cofactor. Requires Mg(2+) as cofactor.

Its subcellular location is the periplasm. The catalysed reaction is Exolytic removal of Delta(4)-unsaturated disaccharide residues from the non-reducing ends of both polymeric chondroitin/dermatan sulfates and their oligosaccharide fragments.. Specific activity for chondroitin sulfate substrates increases moderately (2-fold) while an increase of 25-fold is observed for dermatan sulfate as substrate upon addition of Ca(2+) or Mg(2+) ions. Increasing the concentration of Na(+), K(+) or Cs(+) chloride from 0 to 0.1 M, increases the activity against all substrates. Further increases in salt concentration reduces the activity dramatically, with 50% inhibition occurring at 0.15 M and nearly complete inhibition at 0.4 M salt. The addition of 10 mM Ca(2+) or Mg(2+) ions increases the activity against chondroitin 4- and 6-sulfates by 2-3-fold, while the activity against dermatan sulfate increases much more significantly by 50-fold. Addition of Mn(2+) and Zn(2+) reduces activity against chondroitin sulfate substrates, but increases the activity against dermatan sulfate. Increasing the concentration of CaCl(2) with both chondroitin 4- and 6-sulfates from 0 to 0.04 M increases the activity. A further increase reduces activity, with 50% inhibition at 0.065-0.085 M and a complete inhibition of the reaction at 0.2 M. In case of dermatan sulfate, the addition of low concentration of CaCl(2) dramatically increases the activity from the basal level. The maximal activity is reached at 0.01 M CaCl(2). In terms of biological role, broad-specificity glycosaminoglycan lyase, which acts in an exolytic fashion degrading chondroitin sulfates and dermatan sulfate to yield only disaccharide products. Has a preference for chondroitin 4-sulfate over chondroitin 6-sulfate. Has extremely low activity against hyaluronic acid. Is not active against acharan sulfate, heparin or heparan sulfate. The polypeptide is Chondroitin sulfate ABC exolyase (chonabc) (Bacteroides thetaiotaomicron).